The sequence spans 493 residues: Transcript termination protein A18 (493 aa).

One can recognise a Helicase ATP-binding domain in the interval 100–256; the sequence is MIESKRPLYI…NSIINIAKLS (157 aa). 113–120 contributes to the ATP binding site; sequence LACGFGKT. The DESH box motif lies at 206 to 209; sequence DESH.

The protein belongs to the helicase family. Poxviruses subfamily. As to quaternary structure, interacts with G2. Might be part of a transcription complex composed at least of G2, A18, and H5.

It localises to the virion. DNA helicase which seems to act as a postreplicative transcription termination factor. Involved in ATP-dependent release of nascent RNA. Forms a stable complex with single-stranded DNA, and to a lesser extent RNA. The sequence is that of Transcript termination protein A18 from Homo sapiens (Human).